Consider the following 172-residue polypeptide: MPSPAAPRPNRQSRNLQVGEWGEQLVCQWLTQQQWHILDRRWHCRWGEIDIIARSNPPLPGQDSNTRLAFVEVKTRRAQNWDADGLLAITPQKQQKLWKTAQLYLKKHPELAELFCQFDVALVQCNLNSNSPSKTVHVQDDLQVTTVEINQPIHVRGYQFMLLDYIESAFTL.

Belongs to the UPF0102 family.

This is UPF0102 protein AM1_3954 from Acaryochloris marina (strain MBIC 11017).